Reading from the N-terminus, the 181-residue chain is uncharacterized protein (181 aa).

Positions 1–23 are cleaved as a signal peptide; the sequence is MKKCLLFLTTIALILSLSTNAFA.

This is an uncharacterized protein from Bacillus subtilis (strain 168).